A 101-amino-acid chain; its full sequence is uncharacterized protein (101 aa).

The next 2 membrane-spanning stretches (helical) occupy residues Ile3 to Phe23 and Ala39 to Phe59.

Its subcellular location is the membrane. This is an uncharacterized protein from Saccharomyces cerevisiae (strain ATCC 204508 / S288c) (Baker's yeast).